A 316-amino-acid chain; its full sequence is Olfactory receptor 12D3 (316 aa).

Residues 1-23 (MENVTTMNEFLLLGLTGVQELQP) are Extracellular-facing. Asn3 is a glycosylation site (N-linked (GlcNAc...) asparagine). Residues 24–44 (FFFGIFLIIYLINLIGNGSIL) traverse the membrane as a helical segment. Residues 45–52 (VMVVLEPQ) lie on the Cytoplasmic side of the membrane. Residues 53–73 (LHSPMYFFLGNLSCLDISYSS) traverse the membrane as a helical segment. Residues 74 to 97 (VTLPKLLVNLVCSRRAISFLGCIT) lie on the Extracellular side of the membrane. A disulfide bond links Cys95 and Cys187. The chain crosses the membrane as a helical span at residues 98-118 (QLHFFHFLGSTEAILLAIMAF). Topologically, residues 119–137 (DRFVAICNPLRYTVIMNPQ) are cytoplasmic. The chain crosses the membrane as a helical span at residues 138–158 (VCILLAAAAWLISFFYALMHS). Topologically, residues 159-195 (VMTAHLSFCGSQKLNHFFYDVKPLLELACSDTLLNQW) are extracellular. A helical transmembrane segment spans residues 196–215 (LLSIVTGSISMGAFFLTLLS). The Cytoplasmic portion of the chain corresponds to 216–236 (CFYVIGFLLFKNRSCRILHKA). Residues 237–257 (LSTCASHFMVVCLFYGPVGFT) form a helical membrane-spanning segment. The Extracellular segment spans residues 258–270 (YIRPASATSMIQD). A helical transmembrane segment spans residues 271-291 (RIMAIMYSAVTPVLNPLIYTL). At 292 to 316 (RNKEVMMALKKIFGRKLFKDWQQHH) the chain is on the cytoplasmic side.

This sequence belongs to the G-protein coupled receptor 1 family.

Its subcellular location is the cell membrane. Its function is as follows. Odorant receptor. This Homo sapiens (Human) protein is Olfactory receptor 12D3 (OR12D3).